We begin with the raw amino-acid sequence, 766 residues long: Probable serine/threonine-protein kinase KKQ8 (766 aa).

Disordered regions lie at residues 1-165 (MPEH…DTSS), 201-240 (GHYA…AAQL), 277-297 (SDAN…LDLP), 362-384 (TRSH…DDPS), and 417-437 (AAKN…AGVQ). Over residues 14–25 (RSLSLGSSMRSL) the composition is skewed to low complexity. Positions 49–64 (VDIRVDTASASREHTP) are enriched in basic and acidic residues. Positions 94 to 120 (LTPTNSNPQSKSGSPVSQNTSQESLIT) are enriched in polar residues. The segment covering 127 to 137 (EDYRPSKDSRR) has biased composition (basic and acidic residues). 2 stretches are compositionally biased toward polar residues: residues 140–165 (RNAS…DTSS) and 214–223 (PTSSRVPSRS). Basic and acidic residues predominate over residues 288-297 (SKNDGHLDLP). Over residues 372–382 (DSSDDDEELDD) the composition is skewed to acidic residues. Positions 419 to 430 (KNKHNQSSKHRT) are enriched in basic residues. The 304-residue stretch at 449-752 (GKCVAVVGHG…IDKLLQTGWM (304 aa)) folds into the Protein kinase domain. ATP is bound by residues 455-463 (VGHGAYGVV) and Lys493. Asp603 acts as the Proton acceptor in catalysis.

The protein belongs to the protein kinase superfamily. CAMK Ser/Thr protein kinase family. NPR/HAL subfamily. HAL5 sub-subfamily.

The protein resides in the cytoplasm. It carries out the reaction L-seryl-[protein] + ATP = O-phospho-L-seryl-[protein] + ADP + H(+). The enzyme catalyses L-threonyl-[protein] + ATP = O-phospho-L-threonyl-[protein] + ADP + H(+). The polypeptide is Probable serine/threonine-protein kinase KKQ8 (KKQ8) (Candida glabrata (strain ATCC 2001 / BCRC 20586 / JCM 3761 / NBRC 0622 / NRRL Y-65 / CBS 138) (Yeast)).